The chain runs to 308 residues: Glutaminase (308 aa).

Substrate is bound by residues S66, N117, E161, N168, Y192, Y244, and V262.

Belongs to the glutaminase family. In terms of assembly, homotetramer.

The catalysed reaction is L-glutamine + H2O = L-glutamate + NH4(+). In Cronobacter sakazakii (strain ATCC BAA-894) (Enterobacter sakazakii), this protein is Glutaminase.